Consider the following 109-residue polypeptide: uncharacterized protein (109 aa).

Residues 63-85 form a helical membrane-spanning segment; that stretch reads LFVKTFFACTYIIMLAFQVYIFL.

The protein localises to the membrane. This is an uncharacterized protein from Saccharomyces cerevisiae (strain ATCC 204508 / S288c) (Baker's yeast).